Here is a 187-residue protein sequence, read N- to C-terminus: Ribosome-recycling factor (187 aa).

It belongs to the RRF family.

It localises to the cytoplasm. In terms of biological role, responsible for the release of ribosomes from messenger RNA at the termination of protein biosynthesis. May increase the efficiency of translation by recycling ribosomes from one round of translation to another. The sequence is that of Ribosome-recycling factor from Flavobacterium johnsoniae (strain ATCC 17061 / DSM 2064 / JCM 8514 / BCRC 14874 / CCUG 350202 / NBRC 14942 / NCIMB 11054 / UW101) (Cytophaga johnsonae).